We begin with the raw amino-acid sequence, 155 residues long: Ribosomal RNA large subunit methyltransferase H (155 aa).

S-adenosyl-L-methionine contacts are provided by residues Leu-72, Gly-104, and 123 to 128 (LSKMTF).

It belongs to the RNA methyltransferase RlmH family. In terms of assembly, homodimer.

The protein resides in the cytoplasm. It catalyses the reaction pseudouridine(1915) in 23S rRNA + S-adenosyl-L-methionine = N(3)-methylpseudouridine(1915) in 23S rRNA + S-adenosyl-L-homocysteine + H(+). Its function is as follows. Specifically methylates the pseudouridine at position 1915 (m3Psi1915) in 23S rRNA. The chain is Ribosomal RNA large subunit methyltransferase H from Cytophaga hutchinsonii (strain ATCC 33406 / DSM 1761 / CIP 103989 / NBRC 15051 / NCIMB 9469 / D465).